The sequence spans 236 residues: Small ribosomal subunit protein eS6 (236 aa).

A phosphoserine mark is found at Ser-232 and Ser-233.

The protein belongs to the eukaryotic ribosomal protein eS6 family. Post-translationally, phosphorylated.

This is Small ribosomal subunit protein eS6 (RPS6) from Debaryomyces hansenii (strain ATCC 36239 / CBS 767 / BCRC 21394 / JCM 1990 / NBRC 0083 / IGC 2968) (Yeast).